The following is a 280-amino-acid chain: uncharacterized protein (280 aa).

The HTH rpiR-type domain occupies 1 to 78 (MDVIQRIKEK…VLLAQSISRA (78 aa)). Positions 37-57 (ISDLSEKAGVKSEASVVKFYK) form a DNA-binding region, H-T-H motif. In terms of domain architecture, SIS spans 123 to 263 (TVDLFKNAQR…YTLLAARDPR (141 aa)).

This is an uncharacterized protein from Thermotoga maritima (strain ATCC 43589 / DSM 3109 / JCM 10099 / NBRC 100826 / MSB8).